Consider the following 102-residue polypeptide: Putative pterin-4-alpha-carbinolamine dehydratase (102 aa).

Belongs to the pterin-4-alpha-carbinolamine dehydratase family.

The catalysed reaction is (4aS,6R)-4a-hydroxy-L-erythro-5,6,7,8-tetrahydrobiopterin = (6R)-L-erythro-6,7-dihydrobiopterin + H2O. This Burkholderia cenocepacia (strain ATCC BAA-245 / DSM 16553 / LMG 16656 / NCTC 13227 / J2315 / CF5610) (Burkholderia cepacia (strain J2315)) protein is Putative pterin-4-alpha-carbinolamine dehydratase.